Consider the following 210-residue polypeptide: Superoxide dismutase [Mn], mitochondrial (210 aa).

Residues His-29, His-77, Asp-164, and His-168 each coordinate Mn(2+).

This sequence belongs to the iron/manganese superoxide dismutase family. As to quaternary structure, homotetramer. Mn(2+) is required as a cofactor.

It is found in the mitochondrion matrix. It carries out the reaction 2 superoxide + 2 H(+) = H2O2 + O2. Its function is as follows. Destroys superoxide anion radicals which are normally produced within the cells and which are toxic to biological systems. The protein is Superoxide dismutase [Mn], mitochondrial (sodB) of Aspergillus niger.